The sequence spans 513 residues: ABC transporter H family member 2 (513 aa).

Positions 39 to 280 (LTMKNIHKTY…EHYQKLYKEC (242 aa)) constitute an ABC transporter domain. 75–82 (GTSGGGKT) is a binding site for ATP. The segment at 291-471 (VTSVFKNDDD…SSSYSNNNNN (181 aa)) is disordered. A compositionally biased stretch (low complexity) spans 324–360 (SYNNNNSNLNNNSNSNSNNNSNNNNSKNYASSSSSSS). Residues 361–386 (VLNGKLSQSTVNNSSIYNHNNDSPFF) show a composition bias toward polar residues. Low complexity predominate over residues 387–471 (NSNNNNNINN…SSSYSNNNNN (85 aa)).

Belongs to the ABC transporter superfamily.

The sequence is that of ABC transporter H family member 2 (abcH2) from Dictyostelium discoideum (Social amoeba).